A 603-amino-acid chain; its full sequence is Penicillin-binding protein activator LpoA (603 aa).

Residues methionine 1–alanine 26 form the signal peptide. Cysteine 27 carries N-palmitoyl cysteine lipidation. Cysteine 27 carries the S-diacylglycerol cysteine lipid modification.

It belongs to the LpoA family. In terms of assembly, interacts with PBP1a.

It localises to the cell outer membrane. Functionally, regulator of peptidoglycan synthesis that is essential for the function of penicillin-binding protein 1A (PBP1a). The polypeptide is Penicillin-binding protein activator LpoA (Aliivibrio fischeri (strain ATCC 700601 / ES114) (Vibrio fischeri)).